The sequence spans 275 residues: Tumor necrosis factor receptor superfamily member 14 (275 aa).

A signal peptide spans 1-38 (MEPLPGWGSAPWSQAPTDNTFRLVPCVFLLNLLQRISA). TNFR-Cys repeat units lie at residues 41–75 (SCRQ…GTVC), 77–119 (PCPP…DTVC), and 120–162 (RCIP…DTVC). Intrachain disulfides connect cysteine 42–cysteine 53, cysteine 54–cysteine 67, cysteine 57–cysteine 75, cysteine 78–cysteine 93, cysteine 96–cysteine 111, cysteine 99–cysteine 119, cysteine 121–cysteine 138, and cysteine 144–cysteine 162. N-linked (GlcNAc...) asparagine glycans are attached at residues asparagine 184 and asparagine 197. Residues 211–231 (VVSILLPLVIVGAGIAGFLIC) traverse the membrane as a helical segment.

The protein belongs to the tumor necrosis factor receptor superfamily. As to quaternary structure, interacts with TRAF2, TRAF3 and TRAF5. Interacts (via CRD1/TNFR-Cys 1) with CD160; this interaction is direct. Interacts (via CRD1/TNFR-Cys 1) with BTLA; this interaction is direct. In terms of processing, N-glycosylated. As to expression, expressed at mucosal sites including colon and pulmonary epithelial cells. Expressed in naive T cells.

The protein localises to the cell membrane. Receptor for four distinct ligands: The TNF superfamily members TNFSF14/LIGHT and homotrimeric LTA/lymphotoxin-alpha and the immunoglobulin superfamily members BTLA and CD160, altogether defining a complex stimulatory and inhibitory signaling network. Signals via the TRAF2-TRAF3 E3 ligase pathway to promote immune cell survival and differentiation. Participates in bidirectional cell-cell contact signaling between antigen presenting cells and lymphocytes. In response to ligation of TNFSF14/LIGHT, delivers costimulatory signals to T cells, promoting cell proliferation and effector functions. Interacts with CD160 on NK cells, enhancing IFNG production and anti-tumor immune response. In the context of bacterial infection, acts as a signaling receptor on epithelial cells for CD160 from intraepithelial lymphocytes, triggering the production of antimicrobial proteins and pro-inflammatory cytokines. Upon binding to CD160 on activated CD4+ T cells, down-regulates CD28 costimulatory signaling, restricting memory and alloantigen-specific immune response. May interact in cis (on the same cell) or in trans (on other cells) with BTLA. In cis interactions, appears to play an immune regulatory role inhibiting in trans interactions in naive T cells to maintain a resting state. In trans interactions, can predominate during adaptive immune response to provide survival signals to effector T cells. This is Tumor necrosis factor receptor superfamily member 14 from Mus musculus (Mouse).